Consider the following 353-residue polypeptide: MNGTEGPFFYVPMVNTTGIVRSPYDYPQYYLVSPAAYAALGAYMFLLILLGFPINFLTLYVTIEHKKLRTPLNYILLNLAVADLFMVFGGFTTTMYTSMHGYFVLGRLGCNMEGFFATLGGEIGLWSLVVLAVERWLVVCKPISNFRFGENHAIMGLAFTWVMACSCAVPPLVGWSRYIPEGMQCSCGVDYYTRAEGFNNESFVIYMFACHFIIPMCVVFFCYGRLLCAVKEAAAAQQESETTQRAEKEVTRMVVIMGIAFLICWCPYASVAWYIFTHQGSEFGPVFMTLPAFFAKTSSVYNPLIYILMNKQFRHCMITTLCCGKNPFEEEEGASTASKTEASSVSSSSVSPA.

Over 1-36 the chain is Extracellular; the sequence is MNGTEGPFFYVPMVNTTGIVRSPYDYPQYYLVSPAA. N-linked (GlcNAc...) asparagine glycosylation is found at Asn-2 and Asn-15. Residues 37–61 traverse the membrane as a helical segment; sequence YAALGAYMFLLILLGFPINFLTLYV. Residues 62–73 lie on the Cytoplasmic side of the membrane; the sequence is TIEHKKLRTPLN. A helical membrane pass occupies residues 74–96; sequence YILLNLAVADLFMVFGGFTTTMY. Residues 97–110 lie on the Extracellular side of the membrane; sequence TSMHGYFVLGRLGC. Cys-110 and Cys-187 are oxidised to a cystine. The chain crosses the membrane as a helical span at residues 111–133; the sequence is NMEGFFATLGGEIGLWSLVVLAV. The short motif at 134 to 136 is the 'Ionic lock' involved in activated form stabilization element; the sequence is ERW. Over 134 to 152 the chain is Cytoplasmic; that stretch reads ERWLVVCKPISNFRFGENH. A helical transmembrane segment spans residues 153 to 173; sequence AIMGLAFTWVMACSCAVPPLV. At 174–202 the chain is on the extracellular side; sequence GWSRYIPEGMQCSCGVDYYTRAEGFNNES. A glycan (N-linked (GlcNAc...) asparagine) is linked at Asn-200. A helical membrane pass occupies residues 203–224; sequence FVIYMFACHFIIPMCVVFFCYG. Over 225–252 the chain is Cytoplasmic; that stretch reads RLLCAVKEAAAAQQESETTQRAEKEVTR. Residues 253–274 form a helical membrane-spanning segment; it reads MVVIMGIAFLICWCPYASVAWY. Over 275 to 286 the chain is Extracellular; it reads IFTHQGSEFGPV. Residues 287–308 traverse the membrane as a helical segment; it reads FMTLPAFFAKTSSVYNPLIYIL. The residue at position 296 (Lys-296) is an N6-(retinylidene)lysine. Residues 309–353 lie on the Cytoplasmic side of the membrane; the sequence is MNKQFRHCMITTLCCGKNPFEEEEGASTASKTEASSVSSSSVSPA. 2 S-palmitoyl cysteine lipidation sites follow: Cys-322 and Cys-323. Positions 331–353 are disordered; it reads EEGASTASKTEASSVSSSSVSPA. The segment covering 334 to 353 has biased composition (low complexity); that stretch reads ASTASKTEASSVSSSSVSPA.

Belongs to the G-protein coupled receptor 1 family. Opsin subfamily. Post-translationally, phosphorylated on some or all of the serine and threonine residues present in the C-terminal region. Contains one covalently linked retinal chromophore.

The protein resides in the membrane. It localises to the cell projection. The protein localises to the cilium. Its subcellular location is the photoreceptor outer segment. In terms of biological role, photoreceptor required for image-forming vision at low light intensity. While most salt water fish species use retinal as chromophore, most freshwater fish use 3-dehydroretinal, or a mixture of retinal and 3-dehydroretinal. Light-induced isomerization of 11-cis to all-trans retinal triggers a conformational change that activates signaling via G-proteins. Subsequent receptor phosphorylation mediates displacement of the bound G-protein alpha subunit by arrestin and terminates signaling. The chain is Rhodopsin (rho) from Dicentrarchus labrax (European seabass).